Here is a 340-residue protein sequence, read N- to C-terminus: Protein SSUH2 homolog (340 aa).

A compositionally biased stretch (acidic residues) spans M1–M11. A disordered region spans residues M1–S20.

As to expression, widely expressed, with highest levels in the liver, intestine, tongue and underjaw.

The protein localises to the cytoplasm. It is found in the nucleus. Functionally, plays a role in odontogenesis. The sequence is that of Protein SSUH2 homolog from Mus musculus (Mouse).